Reading from the N-terminus, the 260-residue chain is Proteasome subunit alpha (260 aa).

This sequence belongs to the peptidase T1A family. In terms of assembly, the 20S proteasome core is composed of 14 alpha and 14 beta subunits that assemble into four stacked heptameric rings, resulting in a barrel-shaped structure. The two inner rings, each composed of seven catalytic beta subunits, are sandwiched by two outer rings, each composed of seven alpha subunits. The catalytic chamber with the active sites is on the inside of the barrel. Has a gated structure, the ends of the cylinder being occluded by the N-termini of the alpha-subunits. Is capped at one or both ends by the proteasome regulatory ATPase, PAN.

The protein resides in the cytoplasm. With respect to regulation, the formation of the proteasomal ATPase PAN-20S proteasome complex, via the docking of the C-termini of PAN into the intersubunit pockets in the alpha-rings, triggers opening of the gate for substrate entry. Interconversion between the open-gate and close-gate conformations leads to a dynamic regulation of the 20S proteasome proteolysis activity. Its function is as follows. Component of the proteasome core, a large protease complex with broad specificity involved in protein degradation. This chain is Proteasome subunit alpha, found in Pyrococcus abyssi (strain GE5 / Orsay).